Here is a 322-residue protein sequence, read N- to C-terminus: Protein farnesyltransferase/geranylgeranyltransferase type-1 subunit alpha (322 aa).

Positions 1–27 are disordered; it reads MSSSEEDDGYVPFSKRPEWSDVKPLAQ. PFTA repeat units follow at residues 62 to 95, 103 to 136, 138 to 171, 173 to 205, 213 to 246, and 287 to 321; these read RVLD…EQDE, QEMN…IGSD, KEKE…RDWN, ELAM…NPSP, REVE…KIST, and NSLN…LKLI.

Belongs to the protein prenyltransferase subunit alpha family. As to quaternary structure, heterodimer of fntA and fntB (farnesyltransferase). Heterodimer of an alpha and a beta subunit. Requires Mg(2+) as cofactor.

The catalysed reaction is L-cysteinyl-[protein] + (2E,6E)-farnesyl diphosphate = S-(2E,6E)-farnesyl-L-cysteinyl-[protein] + diphosphate. The enzyme catalyses geranylgeranyl diphosphate + L-cysteinyl-[protein] = S-geranylgeranyl-L-cysteinyl-[protein] + diphosphate. Its function is as follows. Catalyzes the transfer of a farnesyl or geranyl-geranyl moiety from farnesyl or geranyl-geranyl diphosphate to a cysteine at the fourth position from the C-terminus of several proteins having the C-terminal sequence Cys-aliphatic-aliphatic-X. The alpha subunit is thought to participate in a stable complex with the substrate. The beta subunit binds the peptide substrate. The protein is Protein farnesyltransferase/geranylgeranyltransferase type-1 subunit alpha (fntA) of Dictyostelium discoideum (Social amoeba).